A 460-amino-acid polypeptide reads, in one-letter code: Cysteine--tRNA ligase (460 aa).

C28 lines the Zn(2+) pocket. The 'HIGH' region motif lies at 30-40 (MTVYDYCHLGH). C209, H234, and E238 together coordinate Zn(2+). Positions 266-270 (KMSKS) match the 'KMSKS' region motif. K269 lines the ATP pocket.

This sequence belongs to the class-I aminoacyl-tRNA synthetase family. In terms of assembly, monomer. It depends on Zn(2+) as a cofactor.

It localises to the cytoplasm. It carries out the reaction tRNA(Cys) + L-cysteine + ATP = L-cysteinyl-tRNA(Cys) + AMP + diphosphate. This is Cysteine--tRNA ligase from Pseudomonas putida (strain GB-1).